We begin with the raw amino-acid sequence, 247 residues long: C-type lectin domain family 7 member A (247 aa).

Over 1–44 (MEYHPDLENLDEDGYTQLHFDSRSNTRIAVVSEKGSCVASPPWR) the chain is Cytoplasmic. Residues 15–18 (YTQL) carry the ITAM-like motif. Residues 45–65 (LIAVILGILCLVILVIAVVLG) traverse the membrane as a helical; Signal-anchor for type II membrane protein segment. The Extracellular portion of the chain corresponds to 66-247 (TMAIWRPNSG…CSICEKKFSM (182 aa)). The segment at 81-105 (NGYFPSRNKENHSQPTQSPLEESVT) is disordered. A glycan (N-linked (GlcNAc...) asparagine) is linked at N91. Positions 93–105 (SQPTQSPLEESVT) are enriched in polar residues. Intrachain disulfides connect C120–C131, C148–C241, and C220–C233. One can recognise a C-type lectin domain in the interval 127–242 (YEKSCYLFSP…CSVPSCSICE (116 aa)). 146-153 (RQCSQLGS) contacts (1,3-beta-D-glucosyl)n. Positions 157, 159, and 163 each coordinate a divalent metal cation. Residue E195 coordinates (1,3-beta-D-glucosyl)n. E242 is a binding site for a divalent metal cation.

As to quaternary structure, homodimer. Interacts with SYK; participates in leukocyte activation in presence of fungal pathogens. Interacts with CD37; this interaction controls CLEC7A-mediated IL-6 production. Post-translationally, phosphorylated on tyrosine residues in response to beta-glucan binding. In terms of tissue distribution, detected in dendritic cells, in paracortical and medullary regions of lymph nodes, and in spleen red pulp and white pulp.

Its subcellular location is the cell membrane. Functionally, lectin that functions as a pattern recognizing receptor (PRR) specific for beta-1,3-linked and beta-1,6-linked glucans, which constitute cell wall constituents from pathogenic bacteria and fungi. Necessary for the TLR2-mediated inflammatory response and activation of NF-kappa-B: upon beta-glucan binding, recruits SYK via its ITAM motif and promotes a signaling cascade that activates some CARD domain-BCL10-MALT1 (CBM) signalosomes, leading to the activation of NF-kappa-B and MAP kinase p38 (MAPK11, MAPK12, MAPK13 and/or MAPK14) pathways which stimulate expression of genes encoding pro-inflammatory cytokines and chemokines. Enhances cytokine production in macrophages and dendritic cells. Mediates production of reactive oxygen species in the cell. Mediates phagocytosis of C.albicans conidia. Binds T-cells in a way that does not involve their surface glycans and plays a role in T-cell activation. Stimulates T-cell proliferation. Induces phosphorylation of SCIMP after binding beta-glucans. The protein is C-type lectin domain family 7 member A (CLEC7A) of Macaca mulatta (Rhesus macaque).